The primary structure comprises 224 residues: Prothoracicotropic hormone (224 aa).

Positions 1–29 are cleaved as a signal peptide; it reads MITRPIILVILCYAILMIVQSFVPKAVAL. Cystine bridges form between cysteine 132–cysteine 169, cysteine 155–cysteine 211, and cysteine 163–cysteine 213. N-linked (GlcNAc...) asparagine glycosylation is present at asparagine 156.

As to quaternary structure, homodimer; disulfide-linked. PTTH is synthesized by two dorsolateral neurosecretory cells of the Bombyx brain.

PTTH is a brain secretory polypeptide of insects which stimulates the prothoracic glands to produce and release ecdysone, the steroid essential to insect development. Functionally, peptides P2K and P6K are presumed to be cleaved post-translationally and may play some unknown physiologically or developmentally important functions. The chain is Prothoracicotropic hormone from Bombyx mori (Silk moth).